We begin with the raw amino-acid sequence, 264 residues long: MPKHSALERAWPAKEIVEDLLELRKRSPLTHIMTNIVVTNWTANVLLAVGASPAMVIAEEEAGEFVKIANGLLINVGTITSNDAKAMKIAATVAHQTNTPWVLDPVAVGALGFRTETTKKLLDLKPTVIRGNASEILTLAGIAGKGKGVDSTVNSKDALPYAQELSGKTGAVVAVSGEVDYVTNGKETIEIYGGDPIMTKVTGVGCSLGALIASFLGIQKDPLRASASASAVFAIAGSRSAKKSNGPGSFAINFIDQLSQLSIE.

M55 serves as a coordination point for substrate. ATP contacts are provided by R130 and S176. A substrate-binding site is contributed by G203.

This sequence belongs to the Thz kinase family. It depends on Mg(2+) as a cofactor.

The enzyme catalyses 5-(2-hydroxyethyl)-4-methylthiazole + ATP = 4-methyl-5-(2-phosphooxyethyl)-thiazole + ADP + H(+). It functions in the pathway cofactor biosynthesis; thiamine diphosphate biosynthesis; 4-methyl-5-(2-phosphoethyl)-thiazole from 5-(2-hydroxyethyl)-4-methylthiazole: step 1/1. In terms of biological role, catalyzes the phosphorylation of the hydroxyl group of 4-methyl-5-beta-hydroxyethylthiazole (THZ). The polypeptide is Hydroxyethylthiazole kinase (Leptospira borgpetersenii serovar Hardjo-bovis (strain JB197)).